The sequence spans 483 residues: MDWAEKYRPRHLNEMVGNREALHQMSEWATRWTVESPPLILYGKPGIGKTSSAWALAHDMNWEVVELNASDQRTKAVIEKVAGGSASTGSLTGAARKLIILDEADNLQGNADRGGARAIAEVIRQARQPLILIANDLYGLDGTIRNLCTKVQFKALPAKSLVPRLREICSREQLTCSAQALTDIAEQSGGDIRSAVTMLYASAIGKDTVGEDDVSISAKDSRASIFDLVAATLGYRQVPSLLDMSMSVDETPDTILQWIEGNLGVLPDRKKTAQAYAALSRADMYLGYTFLTQYYTLWRYATSVMLYGVHDVMKGRPSGYAKIMPPSRWRQMSVAKKQKTIREQLLSDMGTSMHMSASTVRNLYLCPISLLAKQFPEQFAKSYDLDVDKLDILIHDPATSKSIIKKIEDEKKQIEKELKKKKKEEDAKGKKARGSKKEKEPIVEETPSIDSFSSQEPGNPPEQPSTEPVEKDKKSSQSTLFSF.

43–50 provides a ligand contact to ATP; the sequence is GKPGIGKT. Residues 417-442 show a composition bias toward basic and acidic residues; it reads ELKKKKKEEDAKGKKARGSKKEKEPI. Positions 417–483 are disordered; the sequence is ELKKKKKEED…KSSQSTLFSF (67 aa). The span at 448-457 shows a compositional bias: polar residues; sequence SIDSFSSQEP.

It belongs to the activator 1 small subunits family. RfcL subfamily. As to quaternary structure, heteromultimer composed of small subunits (RfcS) and large subunits (RfcL).

In terms of biological role, part of the RFC clamp loader complex which loads the PCNA sliding clamp onto DNA. The protein is Replication factor C large subunit of Methanospirillum hungatei JF-1 (strain ATCC 27890 / DSM 864 / NBRC 100397 / JF-1).